The chain runs to 294 residues: Acetylglutamate kinase (294 aa).

Residues 66-67 (GG), arginine 88, and asparagine 193 contribute to the substrate site.

This sequence belongs to the acetylglutamate kinase family. ArgB subfamily.

The protein localises to the cytoplasm. It carries out the reaction N-acetyl-L-glutamate + ATP = N-acetyl-L-glutamyl 5-phosphate + ADP. It functions in the pathway amino-acid biosynthesis; L-arginine biosynthesis; N(2)-acetyl-L-ornithine from L-glutamate: step 2/4. Functionally, catalyzes the ATP-dependent phosphorylation of N-acetyl-L-glutamate. This Agrobacterium fabrum (strain C58 / ATCC 33970) (Agrobacterium tumefaciens (strain C58)) protein is Acetylglutamate kinase.